Here is a 559-residue protein sequence, read N- to C-terminus: MTDSKGYAVNDLVWAKMKGFSPWPGRISEPPAELRRITVKKNIPVRCIFFFGSNNYAWIEETQIKPYQEFKEKLLSSCKSAGFKEAVQQIEEFIASPENFQHLFASEQDNRPDPDVEFNKLREGGTESGEETTVNNTSTPAALESVETTPVTAKKSAAKKKVRASLPIKLHVDKVVVFRSVAASTTKARAIGNKAKAAAALNDTSSPKRKRKILNDTAGDVSSLDLDTFSPVRRNVPVSHLLNRPTVARPATPEIDMTSVSNALQSRNIQASNLKFGFLGLGIMGCGMVKNLLNSGHSVVVWNRTATKCRKFQEAGAEVADTPSDVIEMTDVTFSCVADPQVAKELVFGNCGVMSANLVGKGYVEMTGVDPETSHDIAEQIIAKGGRYLEAQIQGSKNQAEEGTLIILAAGERLLFEECQTCFEAISRNSFYMGDVGNATKMNLVLQMISGVMLAGIAEGLALADRAGLQQKDVLEVLELTSMSSELVMQKGNAIIKGEFPPQQALKHMQKDLKLALNMAEGLEQPLPITAASNEVYKHAKRLGYGSHDSSAVYVRARF.

In terms of domain architecture, PWWP spans 9-70 (VNDLVWAKMK…ETQIKPYQEF (62 aa)). The tract at residues 106 to 137 (SEQDNRPDPDVEFNKLREGGTESGEETTVNNT) is disordered. Residues 108 to 125 (QDNRPDPDVEFNKLREGG) show a composition bias toward basic and acidic residues. The interval 267 to 559 (RNIQASNLKF…SSAVYVRARF (293 aa)) is dehydrogenase domain. NAD(+) contacts are provided by residues 277-291 (GFLGLGIMGCGMVKN) and lysine 511.

It belongs to the HIBADH-related family. NP60 subfamily. In terms of assembly, binds to mononucleosomes.

It is found in the chromosome. Nucleosome-destabilizing factor that is recruited to genes during transcriptional activation and colocalizes with a subset of trimethylated 'Lys-36' histone H3 (H3K36me3)-enriched regions. The protein is Cytokine-like nuclear factor N-PAC of Aedes aegypti (Yellowfever mosquito).